The chain runs to 245 residues: tRNA1(Val) (adenine(37)-N6)-methyltransferase (245 aa).

The protein belongs to the methyltransferase superfamily. tRNA (adenine-N(6)-)-methyltransferase family.

The protein resides in the cytoplasm. It carries out the reaction adenosine(37) in tRNA1(Val) + S-adenosyl-L-methionine = N(6)-methyladenosine(37) in tRNA1(Val) + S-adenosyl-L-homocysteine + H(+). In terms of biological role, specifically methylates the adenine in position 37 of tRNA(1)(Val) (anticodon cmo5UAC). The protein is tRNA1(Val) (adenine(37)-N6)-methyltransferase of Escherichia fergusonii (strain ATCC 35469 / DSM 13698 / CCUG 18766 / IAM 14443 / JCM 21226 / LMG 7866 / NBRC 102419 / NCTC 12128 / CDC 0568-73).